A 535-amino-acid chain; its full sequence is Ribonuclease Y (535 aa).

A helical membrane pass occupies residues 4–24 (IILLIVSALIGLILGYALISI). The segment at 118 to 141 (ENLSSKEKVLDSKEQSLTDKSKHI) is disordered. The KH domain occupies 225–285 (TITSVHLPDD…IRREIARMTL (61 aa)). The region spanning 351–444 (VLRHSVEVGK…VAAADALSSA (94 aa)) is the HD domain.

Belongs to the RNase Y family.

It is found in the cell membrane. Its function is as follows. Endoribonuclease that initiates mRNA decay. The polypeptide is Ribonuclease Y (Streptococcus pyogenes serotype M2 (strain MGAS10270)).